The following is a 1749-amino-acid chain: Intraflagellar transport protein 172 homolog (1749 aa).

Position 1 is an N-acetylmethionine (Met-1). Lys-4 participates in a covalent cross-link: Glycyl lysine isopeptide (Lys-Gly) (interchain with G-Cter in SUMO1). WD repeat units lie at residues 14–53 (DGAA…RDKF), 64–103 (RKSY…GDKK), 110–148 (IQTS…SSTI), 150–191 (GTES…ESQG), 195–233 (NHPC…QTFD), 238–278 (PQER…WEEA), 284–323 (TNLY…SIYK), 483–520 (SHES…CSKT), and 521–559 (MILN…ERVT). Residues 593-624 (DEGLIEFGTAIDDGNYIRATAFLETLEMTPET) form a TPR 1 repeat. Arg-672 carries the omega-N-methylarginine modification. TPR repeat units follow at residues 692 to 725 (EKNY…DECI), 809 to 842 (GELY…MKAV), 854 to 887 (VKLE…IKAI), 912 to 945 (SKYY…KDAI), 947 to 970 (MYTQ…PEDV), 971 to 1004 (SVLY…DLAI), 1042 to 1075 (EGRL…EEAY), 1142 to 1175 (PEVH…KEAV), 1276 to 1309 (VEGF…GNSG), 1345 to 1378 (IGKH…NKAK), 1411 to 1445 (GVDV…LHKY), 1447 to 1477 (ALYA…NPQN), and 1574 to 1607 (DKAF…TDAI).

This sequence belongs to the IFT172 family. Interacts with IFT88. Interacts with IFT57. Interacts with RABL2/RABL2A; binds preferentially to GDP-bound RABL2.

It is found in the cell projection. The protein resides in the cilium. In terms of biological role, required for the maintenance and formation of cilia. Plays an indirect role in hedgehog (Hh) signaling, cilia being required for all activity of the hedgehog pathway. This chain is Intraflagellar transport protein 172 homolog (IFT172), found in Homo sapiens (Human).